The following is a 225-amino-acid chain: Ribosomal RNA small subunit methyltransferase G (225 aa).

S-adenosyl-L-methionine is bound by residues G62, A113–E114, and K130.

Belongs to the methyltransferase superfamily. RNA methyltransferase RsmG family.

The protein resides in the cytoplasm. Specifically methylates the N7 position of a guanine in 16S rRNA. The sequence is that of Ribosomal RNA small subunit methyltransferase G from Petrotoga mobilis (strain DSM 10674 / SJ95).